Reading from the N-terminus, the 364-residue chain is tRNA 2-selenouridine synthase (364 aa).

Residues 14–137 enclose the Rhodanese domain; sequence LLADTPLIDV…LRQTAIQATW (124 aa). Residue Cys-97 is the S-selanylcysteine intermediate of the active site. Gly-149 is a binding site for (2E)-geranyl diphosphate.

This sequence belongs to the SelU family. In terms of assembly, monomer.

The enzyme catalyses 5-methylaminomethyl-2-thiouridine(34) in tRNA + selenophosphate + (2E)-geranyl diphosphate + H2O + H(+) = 5-methylaminomethyl-2-selenouridine(34) in tRNA + (2E)-thiogeraniol + phosphate + diphosphate. It catalyses the reaction 5-methylaminomethyl-2-thiouridine(34) in tRNA + (2E)-geranyl diphosphate = 5-methylaminomethyl-S-(2E)-geranyl-thiouridine(34) in tRNA + diphosphate. The catalysed reaction is 5-methylaminomethyl-S-(2E)-geranyl-thiouridine(34) in tRNA + selenophosphate + H(+) = 5-methylaminomethyl-2-(Se-phospho)selenouridine(34) in tRNA + (2E)-thiogeraniol. It carries out the reaction 5-methylaminomethyl-2-(Se-phospho)selenouridine(34) in tRNA + H2O = 5-methylaminomethyl-2-selenouridine(34) in tRNA + phosphate. Involved in the post-transcriptional modification of the uridine at the wobble position (U34) of tRNA(Lys), tRNA(Glu) and tRNA(Gln). Catalyzes the conversion of 2-thiouridine (S2U-RNA) to 2-selenouridine (Se2U-RNA). Acts in a two-step process involving geranylation of 2-thiouridine (S2U) to S-geranyl-2-thiouridine (geS2U) and subsequent selenation of the latter derivative to 2-selenouridine (Se2U) in the tRNA chain. The polypeptide is tRNA 2-selenouridine synthase (Salmonella typhimurium (strain LT2 / SGSC1412 / ATCC 700720)).